We begin with the raw amino-acid sequence, 368 residues long: Ferredoxin--NADP reductase (368 aa).

The FAD site is built by Asp-56, Gln-64, Tyr-69, Val-109, Phe-144, Asp-310, and Thr-351.

This sequence belongs to the ferredoxin--NADP reductase type 2 family. In terms of assembly, homodimer. Requires FAD as cofactor.

The catalysed reaction is 2 reduced [2Fe-2S]-[ferredoxin] + NADP(+) + H(+) = 2 oxidized [2Fe-2S]-[ferredoxin] + NADPH. The sequence is that of Ferredoxin--NADP reductase from Leptothrix cholodnii (strain ATCC 51168 / LMG 8142 / SP-6) (Leptothrix discophora (strain SP-6)).